Reading from the N-terminus, the 838-residue chain is DNA gyrase subunit A (838 aa).

One can recognise a Topo IIA-type catalytic domain in the interval 41-510; sequence LPEVRDGLKP…ADGDVSDEDL (470 aa). Catalysis depends on Tyr129, which acts as the O-(5'-phospho-DNA)-tyrosine intermediate. The short motif at 537 to 543 is the GyrA-box element; sequence QKRGGKG.

This sequence belongs to the type II topoisomerase GyrA/ParC subunit family. As to quaternary structure, heterotetramer, composed of two GyrA and two GyrB chains. In the heterotetramer, GyrA contains the active site tyrosine that forms a transient covalent intermediate with DNA, while GyrB binds cofactors and catalyzes ATP hydrolysis.

It is found in the cytoplasm. The catalysed reaction is ATP-dependent breakage, passage and rejoining of double-stranded DNA.. Its function is as follows. A type II topoisomerase that negatively supercoils closed circular double-stranded (ds) DNA in an ATP-dependent manner to modulate DNA topology and maintain chromosomes in an underwound state. Negative supercoiling favors strand separation, and DNA replication, transcription, recombination and repair, all of which involve strand separation. Also able to catalyze the interconversion of other topological isomers of dsDNA rings, including catenanes and knotted rings. Type II topoisomerases break and join 2 DNA strands simultaneously in an ATP-dependent manner. In Mycobacterium tuberculosis (strain CDC 1551 / Oshkosh), this protein is DNA gyrase subunit A.